We begin with the raw amino-acid sequence, 348 residues long: Phosphoribosylformylglycinamidine cyclo-ligase (348 aa).

It belongs to the AIR synthase family.

The protein localises to the cytoplasm. The enzyme catalyses 2-formamido-N(1)-(5-O-phospho-beta-D-ribosyl)acetamidine + ATP = 5-amino-1-(5-phospho-beta-D-ribosyl)imidazole + ADP + phosphate + H(+). Its pathway is purine metabolism; IMP biosynthesis via de novo pathway; 5-amino-1-(5-phospho-D-ribosyl)imidazole from N(2)-formyl-N(1)-(5-phospho-D-ribosyl)glycinamide: step 2/2. The polypeptide is Phosphoribosylformylglycinamidine cyclo-ligase (Geotalea uraniireducens (strain Rf4) (Geobacter uraniireducens)).